Consider the following 116-residue polypeptide: MIVKRGDVYFADLSPVVGSEQGGVRPVLVIQNDIGNRFSPTAIVAAITAQIQKAKLPTHVEIDAKRYGFERDSVILLEQIRTIDKQRLTDKITHLDDEMMDKVDEALQISLALIDF.

It belongs to the PemK/MazF family. As to quaternary structure, homodimer. Forms a complex with antitoxin EndoAI in which the toxin activity is inhibited. One dimer binds a ssRNA substrate, forms a heterohexamer composed of alternating toxin and antitoxin homodimers which inhibits the endoribonuclease activity. Antitoxin prevents RNA binding to the endoribonuclease.

Functionally, toxic component of a type II toxin-antitoxin (TA) system. Specific for 5'-UACAU-3' sequences, cleaving after the first U. Yields cleavage products with 3' phosphate and 5' hydroxyl groups. Cannot digest substrate with a UUdUACAUAA cleavage site. Overexpression is toxic for cell growth (shown in E.coli), probably by inhibiting protein synthesis through the cleavage of single-stranded RNA. The toxicity is reversed by the antitoxin EndoAI. Toxin activity cannot be inhibited by MazE from E.coli. The EndoA-EndoAI complex does not seem to bind its own promoter. This Bacillus subtilis (strain 168) protein is Endoribonuclease EndoA.